Consider the following 207-residue polypeptide: Large ribosomal subunit protein uL3 (207 aa).

Positions 126–149 (GPASHGSKKWHRRPGSIGQRKTPG) are disordered.

It belongs to the universal ribosomal protein uL3 family. As to quaternary structure, part of the 50S ribosomal subunit. Forms a cluster with proteins L14 and L19.

In terms of biological role, one of the primary rRNA binding proteins, it binds directly near the 3'-end of the 23S rRNA, where it nucleates assembly of the 50S subunit. The chain is Large ribosomal subunit protein uL3 from Deinococcus geothermalis (strain DSM 11300 / CIP 105573 / AG-3a).